A 453-amino-acid chain; its full sequence is Phosphatidylserine decarboxylase proenzyme 1, mitochondrial (453 aa).

Residues 1-29 constitute a mitochondrion transit peptide; sequence MKPRFPQNVYFLARYSYLRRFQHSQRRTF. Topologically, residues 30–74 are mitochondrial matrix; the sequence is SSFLNNIRSNYSGARASPLGGSSGAGAGAGGGGTGDSKGNAFLVP. A helical membrane pass occupies residues 75 to 93; that stretch reads GATMATILMLGALHARRLY. At 94–453 the chain is on the mitochondrial intermembrane side; sequence EDKKIEEKRE…GQALGRWKEE (360 aa). Residues Asp199, His296, and Ser408 each act as charge relay system; for autoendoproteolytic cleavage activity in the active site. Catalysis depends on Ser408, which acts as the Schiff-base intermediate with substrate; via pyruvic acid; for decarboxylase activity. A Pyruvic acid (Ser); by autocatalysis modification is found at Ser408.

This sequence belongs to the phosphatidylserine decarboxylase family. PSD-B subfamily. Eukaryotic type I sub-subfamily. As to quaternary structure, heterodimer of a large membrane-associated beta subunit and a small pyruvoyl-containing alpha subunit. Pyruvate is required as a cofactor. Is synthesized initially as an inactive proenzyme. Formation of the active enzyme involves a self-maturation process in which the active site pyruvoyl group is generated from an internal serine residue via an autocatalytic post-translational modification. Two non-identical subunits are generated from the proenzyme in this reaction, and the pyruvate is formed at the N-terminus of the alpha chain, which is derived from the carboxyl end of the proenzyme. The autoendoproteolytic cleavage occurs by a canonical serine protease mechanism, in which the side chain hydroxyl group of the serine supplies its oxygen atom to form the C-terminus of the beta chain, while the remainder of the serine residue undergoes an oxidative deamination to produce ammonia and the pyruvoyl prosthetic group on the alpha chain. During this reaction, the Ser that is part of the protease active site of the proenzyme becomes the pyruvoyl prosthetic group, which constitutes an essential element of the active site of the mature decarboxylase. In terms of tissue distribution, expressed in roots, leaves, stems and flowers.

Its subcellular location is the mitochondrion. The protein localises to the mitochondrion inner membrane. It catalyses the reaction a 1,2-diacyl-sn-glycero-3-phospho-L-serine + H(+) = a 1,2-diacyl-sn-glycero-3-phosphoethanolamine + CO2. It participates in phospholipid metabolism; phosphatidylethanolamine biosynthesis; phosphatidylethanolamine from CDP-diacylglycerol: step 2/2. Its function is as follows. Catalyzes the formation of phosphatidylethanolamine (PtdEtn) from phosphatidylserine (PtdSer). Plays a central role in phospholipid metabolism and in the interorganelle trafficking of phosphatidylserine. Contributes only to a minor proportion of PtdEtn production. In Arabidopsis thaliana (Mouse-ear cress), this protein is Phosphatidylserine decarboxylase proenzyme 1, mitochondrial (PSD1).